The sequence spans 842 residues: CRM-domain containing factor CFM3, chloroplastic/mitochondrial (842 aa).

Residues 1 to 82 constitute a chloroplast and mitochondrion transit peptide; sequence MAMASSPACH…RSSGRSTMSL (82 aa). Disordered regions lie at residues 49–80, 141–160, and 254–290; these read AALD…RSTM, RFPW…SARS, and VDYD…LPTE. In terms of domain architecture, CRM 1 spans 167-263; that stretch reads LTLPAAELRR…VDYDEPEPTK (97 aa). Over residues 280 to 290 the composition is skewed to polar residues; it reads GSSNPSLLPTE. CRM domains are found at residues 371-468 and 582-682; these read PSLS…ELAE and ETIT…SSLR. Positions 703-732 form a coiled coil; it reads QALSRHFAKLNRKVERLKAELVQMEDVKEQ. A disordered region spans residues 768-842; that stretch reads VAGATADDDG…DRRNHDVNEY (75 aa). Residues 786–812 are compositionally biased toward acidic residues; sequence DEADYPDSDDEAGDCSEDEGEDDEDEA. Residues 831–842 show a composition bias toward basic and acidic residues; the sequence is DTDRRNHDVNEY.

Interacts with RNA. Part of large ribonucleo-protein particles that contain CAF1 and/or CAF2, and RNC1.

Its subcellular location is the plastid. The protein resides in the chloroplast stroma. It localises to the mitochondrion. In terms of biological role, binds specific group II introns in chloroplasts and facilitates their splicing. Acts on subgroup IIB introns. The substrates of the subgroup IIB also require the CRM domain proteins CAF1 or CAF2, with a simultaneous binding of CFM3 and CAF1 or CAF2. May influence the biogenesis of the mitochondrial small ribosomal subunit. The sequence is that of CRM-domain containing factor CFM3, chloroplastic/mitochondrial from Zea mays (Maize).